Here is a 529-residue protein sequence, read N- to C-terminus: Bifunctional purine biosynthesis protein PurH (529 aa).

Residues 1–148 enclose the MGS-like domain; the sequence is MQQRRPIRRA…KNHKDVAIVV (148 aa).

Belongs to the PurH family.

It catalyses the reaction (6R)-10-formyltetrahydrofolate + 5-amino-1-(5-phospho-beta-D-ribosyl)imidazole-4-carboxamide = 5-formamido-1-(5-phospho-D-ribosyl)imidazole-4-carboxamide + (6S)-5,6,7,8-tetrahydrofolate. The catalysed reaction is IMP + H2O = 5-formamido-1-(5-phospho-D-ribosyl)imidazole-4-carboxamide. Its pathway is purine metabolism; IMP biosynthesis via de novo pathway; 5-formamido-1-(5-phospho-D-ribosyl)imidazole-4-carboxamide from 5-amino-1-(5-phospho-D-ribosyl)imidazole-4-carboxamide (10-formyl THF route): step 1/1. The protein operates within purine metabolism; IMP biosynthesis via de novo pathway; IMP from 5-formamido-1-(5-phospho-D-ribosyl)imidazole-4-carboxamide: step 1/1. The protein is Bifunctional purine biosynthesis protein PurH of Yersinia pseudotuberculosis serotype O:1b (strain IP 31758).